A 297-amino-acid chain; its full sequence is 33 kDa chaperonin (297 aa).

Cystine bridges form between C232-C234 and C266-C269.

It belongs to the HSP33 family. Under oxidizing conditions two disulfide bonds are formed involving the reactive cysteines. Under reducing conditions zinc is bound to the reactive cysteines and the protein is inactive.

The protein localises to the cytoplasm. Functionally, redox regulated molecular chaperone. Protects both thermally unfolding and oxidatively damaged proteins from irreversible aggregation. Plays an important role in the bacterial defense system toward oxidative stress. This is 33 kDa chaperonin from Pseudomonas aeruginosa (strain LESB58).